The primary structure comprises 893 residues: Translation initiation factor IF-2 (893 aa).

2 disordered regions span residues 51–203 (KEHG…AEAE) and 216–299 (EENE…TSMQ). 3 stretches are compositionally biased toward basic and acidic residues: residues 102-203 (ALEE…AEAE), 216-238 (EENE…DADY), and 245-261 (HARE…EQQP). In terms of domain architecture, tr-type G spans 392–561 (GRAPVVTIMG…LLQSEVLELT (170 aa)). The interval 401–408 (GHVDHGKT) is G1. 401-408 (GHVDHGKT) contacts GTP. Positions 426 to 430 (GITQH) are G2. The segment at 447–450 (DTPG) is G3. GTP-binding positions include 447–451 (DTPGH) and 501–504 (NKID). Residues 501-504 (NKID) form a G4 region. Positions 537–539 (SAK) are G5.

It belongs to the TRAFAC class translation factor GTPase superfamily. Classic translation factor GTPase family. IF-2 subfamily.

The protein resides in the cytoplasm. Functionally, one of the essential components for the initiation of protein synthesis. Protects formylmethionyl-tRNA from spontaneous hydrolysis and promotes its binding to the 30S ribosomal subunits. Also involved in the hydrolysis of GTP during the formation of the 70S ribosomal complex. This Aliivibrio fischeri (strain ATCC 700601 / ES114) (Vibrio fischeri) protein is Translation initiation factor IF-2.